The primary structure comprises 205 residues: Small ribosomal subunit protein uS4 (205 aa).

Positions 1–12 (MSKRIQAKHKLD) are enriched in basic residues. The disordered stretch occupies residues 1–49 (MSKRIQAKHKLDRRMGQNIWGRPKSPVNRREYGPGQHGQRRKGKMSDFG). The 62-residue stretch at 94–155 (RRLDAVVYRA…SSRQLEIVIV (62 aa)) folds into the S4 RNA-binding domain.

The protein belongs to the universal ribosomal protein uS4 family. Part of the 30S ribosomal subunit. Contacts protein S5. The interaction surface between S4 and S5 is involved in control of translational fidelity.

Functionally, one of the primary rRNA binding proteins, it binds directly to 16S rRNA where it nucleates assembly of the body of the 30S subunit. In terms of biological role, with S5 and S12 plays an important role in translational accuracy. The chain is Small ribosomal subunit protein uS4 from Methylobacterium radiotolerans (strain ATCC 27329 / DSM 1819 / JCM 2831 / NBRC 15690 / NCIMB 10815 / 0-1).